A 163-amino-acid chain; its full sequence is Ribosome maturation factor RimM (163 aa).

One can recognise a PRC barrel domain in the interval 90–155 (VGEYYCKDLV…ADIDLNKKRL (66 aa)).

The protein belongs to the RimM family. As to quaternary structure, binds ribosomal protein uS19.

It is found in the cytoplasm. Its function is as follows. An accessory protein needed during the final step in the assembly of 30S ribosomal subunit, possibly for assembly of the head region. Essential for efficient processing of 16S rRNA. May be needed both before and after RbfA during the maturation of 16S rRNA. It has affinity for free ribosomal 30S subunits but not for 70S ribosomes. The chain is Ribosome maturation factor RimM from Neorickettsia sennetsu (strain ATCC VR-367 / Miyayama) (Ehrlichia sennetsu).